The chain runs to 112 residues: Nitrogen regulatory protein P-II (112 aa).

Ser49 carries the phosphoserine modification. Tyr51 is subject to O-UMP-tyrosine.

The protein belongs to the P(II) protein family. In terms of assembly, homotrimer. Post-translationally, phosphorylation dependent on the nitrogen source and spectral light quality.

P-II indirectly controls the transcription of the GS gene (glnA). P-II prevents NR-II-catalyzed conversion of NR-I to NR-I-phosphate, the transcriptional activator of glnA. When P-II is phosphorylated, these events are reversed. In nitrogen-limiting conditions, when the ratio of Gln to 2-ketoglutarate decreases, P-II is phosphorylated which allows the deadenylation of glutamine synthetase (GS), thus activating the enzyme. This chain is Nitrogen regulatory protein P-II (glnB), found in Nostoc punctiforme (strain ATCC 29133 / PCC 73102).